The primary structure comprises 76 residues: Small proline-rich protein 2G (76 aa).

3 repeat units span residues 21–29, 30–38, and 39–47. A 3 X 9 AA approximate tandem repeats region spans residues 21 to 47; that stretch reads PKCPEPCPLPKCPEPCPPPKCPEPCPE. Residues 55–76 are disordered; the sequence is QQKCPPVQTPPPCQQKCPPKSK.

Belongs to the cornifin (SPRR) family. In terms of tissue distribution, expressed in uterus.

It localises to the cytoplasm. In terms of biological role, cross-linked envelope protein of keratinocytes. It is a keratinocyte protein that first appears in the cell cytosol, but ultimately becomes cross-linked to membrane proteins by transglutaminase. All that results in the formation of an insoluble envelope beneath the plasma membrane. This chain is Small proline-rich protein 2G (Sprr2g), found in Mus musculus (Mouse).